Consider the following 424-residue polypeptide: Glutamate-1-semialdehyde 2,1-aminomutase (424 aa).

The residue at position 260 (lysine 260) is an N6-(pyridoxal phosphate)lysine.

Belongs to the class-III pyridoxal-phosphate-dependent aminotransferase family. HemL subfamily. It depends on pyridoxal 5'-phosphate as a cofactor.

The protein localises to the cytoplasm. It carries out the reaction (S)-4-amino-5-oxopentanoate = 5-aminolevulinate. Its pathway is porphyrin-containing compound metabolism; protoporphyrin-IX biosynthesis; 5-aminolevulinate from L-glutamyl-tRNA(Glu): step 2/2. The sequence is that of Glutamate-1-semialdehyde 2,1-aminomutase from Nitrosopumilus maritimus (strain SCM1).